We begin with the raw amino-acid sequence, 450 residues long: Glutathione reductase (450 aa).

Residues S14, G15, E34, T41, C42, and K50 each contribute to the FAD site. Glutathione is bound at residue S14. A disulfide bridge links C42 with C47. Y99 provides a ligand contact to glutathione. A115 is a binding site for FAD. NADP(+) contacts are provided by A175, I178, E181, R198, R204, and G262. An FAD-binding site is contributed by D303. NADP(+) is bound at residue E309. T311 is an FAD binding site. R319 provides a ligand contact to glutathione. V342 is a binding site for NADP(+). Residue H439 participates in FAD binding. H439 functions as the Proton acceptor in the catalytic mechanism.

This sequence belongs to the class-I pyridine nucleotide-disulfide oxidoreductase family. As to quaternary structure, homodimer. FAD serves as cofactor.

The protein resides in the cytoplasm. It catalyses the reaction 2 glutathione + NADP(+) = glutathione disulfide + NADPH + H(+). Functionally, catalyzes the reduction of glutathione disulfide (GSSG) to reduced glutathione (GSH). Constitutes the major mechanism to maintain a high GSH:GSSG ratio in the cytosol. The sequence is that of Glutathione reductase (gor) from Escherichia coli (strain K12).